The following is a 298-amino-acid chain: Glycine--tRNA ligase alpha subunit (298 aa).

This sequence belongs to the class-II aminoacyl-tRNA synthetase family. As to quaternary structure, tetramer of two alpha and two beta subunits.

The protein localises to the cytoplasm. It catalyses the reaction tRNA(Gly) + glycine + ATP = glycyl-tRNA(Gly) + AMP + diphosphate. The protein is Glycine--tRNA ligase alpha subunit of Neisseria meningitidis serogroup C / serotype 2a (strain ATCC 700532 / DSM 15464 / FAM18).